A 388-amino-acid chain; its full sequence is Dual-specificity RNA methyltransferase RlmN (388 aa).

Residue Glu109 is the Proton acceptor of the active site. The 240-residue stretch at 115 to 354 folds into the Radical SAM core domain; sequence EEDRATLCVS…TIVRKTRGDD (240 aa). A disulfide bond links Cys122 and Cys359. [4Fe-4S] cluster is bound by residues Cys129, Cys133, and Cys136. Residues 183–184, Ser215, 237–239, and Asn316 each bind S-adenosyl-L-methionine; these read GE and SLH. Cys359 functions as the S-methylcysteine intermediate in the catalytic mechanism.

It belongs to the radical SAM superfamily. RlmN family. It depends on [4Fe-4S] cluster as a cofactor.

It is found in the cytoplasm. It catalyses the reaction adenosine(2503) in 23S rRNA + 2 reduced [2Fe-2S]-[ferredoxin] + 2 S-adenosyl-L-methionine = 2-methyladenosine(2503) in 23S rRNA + 5'-deoxyadenosine + L-methionine + 2 oxidized [2Fe-2S]-[ferredoxin] + S-adenosyl-L-homocysteine. The enzyme catalyses adenosine(37) in tRNA + 2 reduced [2Fe-2S]-[ferredoxin] + 2 S-adenosyl-L-methionine = 2-methyladenosine(37) in tRNA + 5'-deoxyadenosine + L-methionine + 2 oxidized [2Fe-2S]-[ferredoxin] + S-adenosyl-L-homocysteine. Its function is as follows. Specifically methylates position 2 of adenine 2503 in 23S rRNA and position 2 of adenine 37 in tRNAs. m2A2503 modification seems to play a crucial role in the proofreading step occurring at the peptidyl transferase center and thus would serve to optimize ribosomal fidelity. The protein is Dual-specificity RNA methyltransferase RlmN of Klebsiella pneumoniae subsp. pneumoniae (strain ATCC 700721 / MGH 78578).